We begin with the raw amino-acid sequence, 90 residues long: RNA-binding protein Hfq (90 aa).

The Sm domain occupies 11–71 (DVFLNSVRKT…ISTIMPAAPV (61 aa)).

Belongs to the Hfq family. As to quaternary structure, homohexamer.

Its function is as follows. RNA chaperone that binds small regulatory RNA (sRNAs) and mRNAs to facilitate mRNA translational regulation in response to envelope stress, environmental stress and changes in metabolite concentrations. Also binds with high specificity to tRNAs. This is RNA-binding protein Hfq from Maricaulis maris (strain MCS10) (Caulobacter maris).